The primary structure comprises 55 residues: MAKATTIKIKLLSTADTGFFYVTTKNSRTMTDKMTKTKYDPVAKKHVEFKETKIK.

This sequence belongs to the bacterial ribosomal protein bL33 family.

The chain is Large ribosomal subunit protein bL33 from Rhizobium johnstonii (strain DSM 114642 / LMG 32736 / 3841) (Rhizobium leguminosarum bv. viciae).